The sequence spans 186 residues: Ribonuclease HII (186 aa).

The RNase H type-2 domain occupies 2–186; that stretch reads KILAGVDEVG…KTFSPISDLL (185 aa). Residues Asp8, Glu9, and Asp99 each coordinate a divalent metal cation.

It belongs to the RNase HII family. Mn(2+) is required as a cofactor. It depends on Mg(2+) as a cofactor.

The protein localises to the cytoplasm. The catalysed reaction is Endonucleolytic cleavage to 5'-phosphomonoester.. Endonuclease that specifically degrades the RNA of RNA-DNA hybrids. This is Ribonuclease HII from Pelagibacter ubique (strain HTCC1062).